The sequence spans 75 residues: Protein Tlp homolog (75 aa).

The interval 53 to 75 (REALDGMREEIKDEARDKKNGYM) is disordered.

The protein belongs to the Tlp family.

The chain is Protein Tlp homolog from Clostridium botulinum (strain Langeland / NCTC 10281 / Type F).